We begin with the raw amino-acid sequence, 177 residues long: MLDAFSRVVTSADSKAAYVGGADLQALKKFVSEGNKRLDAVNAIVSNASCIVSDAVSGMICENPALISPSGNCYTNRRMAACLRDAEIILRYVSYSLLSGDSSVLEDRCLGGLKETYASLGVPAAGNARAVGIMKATCVGFINNTSNQKKLSTPAGDCSALASECAGYFDKVTSALA.

Residue Tyr18 participates in mesobiliverdin binding. Positions 28, 35, and 39 each coordinate (2R,3E)-phycocyanobilin. Residues Cys50, Asp54, and Cys61 each coordinate 15,16-dihydrobiliverdin. (2R,3E)-phycocyanobilin-binding residues include Asn72, Arg77, Cys82, Arg84, and Asp85. Residue Gln148 coordinates 15,16-dihydrobiliverdin. (2R,3E)-phycocyanobilin-binding residues include Pro154, Gly156, and Cys158.

The protein belongs to the phycobiliprotein family. Heterotetramer of 2 different alpha chains and 2 identical beta chains which form 2 alpha-beta heterodimers within the heterotetramer. In terms of processing, contains two phycocyanobilin chromophores, one mesobiliverdin chromophore and one 15,16-dihydrobiliverdin chromophore with binding mediated by both the alpha and beta subunits.

The protein resides in the plastid. It localises to the chloroplast thylakoid membrane. In terms of biological role, light-harvesting photosynthetic tetrapyrrole chromophore-protein from the phycobiliprotein complex. The chain is Phycocyanin PC645 beta subunit from Chroomonas sp. (strain CCMP270).